An 881-amino-acid polypeptide reads, in one-letter code: EEF1AKMT4-ECE2 readthrough transcript protein (881 aa).

Positions 1–160 (MASPRTPVSP…VHTVDQVLSE (160 aa)) are methyltransferase-like region. The Cytoplasmic segment spans residues 1 to 178 (MASPRTPVSP…QLFGSHTQLE (178 aa)). Positions 26 and 30 each coordinate S-adenosyl-L-methionine. At tyrosine 39 the chain carries Phosphotyrosine. S-adenosyl-L-methionine is bound by residues tryptophan 41, glycine 66, 88 to 89 (DY), 113 to 114 (DV), and lysine 130. Position 174 is a phosphoserine (histidine 174). Residues 179–199 (LVLAGLILVLAALLLGCLVAL) form a helical; Signal-anchor for type II membrane protein membrane-spanning segment. The Lumenal portion of the chain corresponds to 200–881 (WVHRDPAHST…MNPGQLCEVW (682 aa)). In terms of domain architecture, Peptidase M13 spans 209 to 881 (TCVTEACIRV…MNPGQLCEVW (673 aa)). Intrachain disulfides connect cysteine 210/cysteine 215, cysteine 233/cysteine 866, cysteine 241/cysteine 826, cysteine 297/cysteine 546, and cysteine 755/cysteine 878. 7 N-linked (GlcNAc...) asparagine glycosylation sites follow: asparagine 277, asparagine 281, asparagine 322, asparagine 382, asparagine 427, asparagine 494, and asparagine 650. Histidine 718 contacts Zn(2+). Residue glutamate 719 is part of the active site. Residue histidine 722 participates in Zn(2+) binding. N-linked (GlcNAc...) asparagine glycosylation is found at asparagine 743 and asparagine 751. Glutamate 778 provides a ligand contact to Zn(2+). Aspartate 782 serves as the catalytic Proton donor.

This sequence in the N-terminal section; belongs to the methyltransferase superfamily. In the C-terminal section; belongs to the peptidase M13 family. Zn(2+) serves as cofactor. Expressed at high levels in central nervous system. Expressed in adrenal glands, ovary and uterus, and at low levels in heart.

The protein resides in the golgi apparatus membrane. Its subcellular location is the cytoplasmic vesicle. It is found in the secretory vesicle membrane. It carries out the reaction Hydrolysis of the 21-Trp-|-Val-22 bond in big endothelin to form endothelin 1.. Inhibited by phosphoramidon. Converts big endothelin-1 to endothelin-1. May also have methyltransferase activity. May play a role in amyloid-beta processing. The protein is EEF1AKMT4-ECE2 readthrough transcript protein of Mus musculus (Mouse).